A 341-amino-acid polypeptide reads, in one-letter code: tRNA N6-adenosine threonylcarbamoyltransferase (341 aa).

Residues histidine 111 and histidine 115 each contribute to the Fe cation site. Substrate-binding positions include 134-138 (LVSGG), aspartate 167, glycine 180, and asparagine 276. A Fe cation-binding site is contributed by aspartate 304.

Belongs to the KAE1 / TsaD family. Requires Fe(2+) as cofactor.

The protein resides in the cytoplasm. The catalysed reaction is L-threonylcarbamoyladenylate + adenosine(37) in tRNA = N(6)-L-threonylcarbamoyladenosine(37) in tRNA + AMP + H(+). In terms of biological role, required for the formation of a threonylcarbamoyl group on adenosine at position 37 (t(6)A37) in tRNAs that read codons beginning with adenine. Is involved in the transfer of the threonylcarbamoyl moiety of threonylcarbamoyl-AMP (TC-AMP) to the N6 group of A37, together with TsaE and TsaB. TsaD likely plays a direct catalytic role in this reaction. The polypeptide is tRNA N6-adenosine threonylcarbamoyltransferase (Pseudomonas putida (strain ATCC 700007 / DSM 6899 / JCM 31910 / BCRC 17059 / LMG 24140 / F1)).